Consider the following 141-residue polypeptide: Decarboxylase CPUR_05434 (141 aa).

The 96-residue stretch at Glu26–Thr121 folds into the EthD domain.

The protein belongs to the tpcK family.

The catalysed reaction is atrochrysone carboxylate + H(+) = atrochrysone + CO2. Functionally, decarboxylase; part of the ergochrome gene cluster responsible for the typical purple-black color of the ergot sclerotia. The ergochrome gene cluster produces several ergot pigments including the yellow ergochrome secalonic acid and its derivatives, as well as the red anthraquinones endocrocin and clavorubin. The pathway begins with the synthesis of atrochrysone thioester by the polyketide synthase (PKS) CPUR_05437. The atrochrysone carboxyl ACP thioesterase CPUR_05436 then breaks the thioester bond and releases the atrochrysone carboxylic acid from CPUR_05437. The decarboxylase CPUR_05434 then catalyzes the concerted decarboxylation-elimination required to convert atochrysone carboxylic acid into emodin anthrone, which is further oxidized to emodin by the anthrone oxygenase CPUR_05435. Emodin is further modified to yield monodictyphenone via several steps involving CPUR_05427, CPUR_05428, CPUR_05429 and CPUR_05430. The short chain dehydrogenase/reductase CPUR_05418 then catalyzes the C-5 ketoreduction to give the xanthone skeleton of the monomeric units. Ergochromes formation requires further dimerization steps of different xanthone units, probably catalyzed by the cytochrome P450 monooxygenase CPUR_05419. CPUR_05425, CPUR_05426 and CPUR_05431 are unique to Claviceps, thus it is likely that they are involved in further modification of xanthone units or in their dimerization. The yellow ergochromes and the red anthraquinone pigments endocrocin and clavorubin are products from the same PKS derived precursors and the latter are likely shunt products in the pathway of xanthone biosynthesis. It is proposed that atrochrysone carboxylic acid released from the PKS CPUR_05437 can also be converted to endocrocin anthrone which is further oxidized into endocrocin by CPUR_05435. Endocrocin could be then modified to clavorubin, possibly by CPUR_05423 and CPUR_05431. Clavorubin is the principal anthraquinone metabolite produced by the cluster with a much higher yield compared to endocrocin. In Claviceps purpurea (strain 20.1) (Ergot fungus), this protein is Decarboxylase CPUR_05434.